Consider the following 182-residue polypeptide: UPF0316 protein lp_1140 (182 aa).

The next 3 membrane-spanning stretches (helical) occupy residues 1–21 (MHID…YITL), 36–56 (FAAF…SLVL), and 62–82 (PINL…GMVI).

The protein belongs to the UPF0316 family.

The protein resides in the cell membrane. This chain is UPF0316 protein lp_1140, found in Lactiplantibacillus plantarum (strain ATCC BAA-793 / NCIMB 8826 / WCFS1) (Lactobacillus plantarum).